A 176-amino-acid chain; its full sequence is Translation initiation factor IF-3 (176 aa).

It belongs to the IF-3 family. Monomer.

The protein localises to the cytoplasm. In terms of biological role, IF-3 binds to the 30S ribosomal subunit and shifts the equilibrium between 70S ribosomes and their 50S and 30S subunits in favor of the free subunits, thus enhancing the availability of 30S subunits on which protein synthesis initiation begins. The sequence is that of Translation initiation factor IF-3 from Streptococcus uberis (strain ATCC BAA-854 / 0140J).